A 1102-amino-acid chain; its full sequence is Voltage-gated delayed rectifier potassium channel KCNH8 (1102 aa).

Over 1-225 the chain is Cytoplasmic; it reads MPVMKGLLAP…HFSTFKAGWD (225 aa). The region spanning 18-90 is the PAS domain; it reads IATRFDGTHS…LQIEKSLEEK (73 aa). The PAC domain occupies 93-145; that stretch reads FKGEIMFYKKNGAPFWCLLDIVPIKNEKGDVVLFLASFKDITDTKVKITSEDK. The helical transmembrane segment at 226–246 threads the bilayer; that stretch reads WLILLATFYVAVTVPYNVCFI. The Extracellular portion of the chain corresponds to 247–255; that stretch reads GNEDLSTTR. The chain crosses the membrane as a helical span at residues 256-276; that stretch reads STTVSDIAVEILFIIDIILNF. The Cytoplasmic segment spans residues 277–298; the sequence is RTTYVSKSGQVIFEARSICIHY. A helical transmembrane segment spans residues 299–319; the sequence is VTTWFIIDLIAALPFDLLYAF. Residue N320 is glycosylated (N-linked (GlcNAc...) asparagine). The Extracellular portion of the chain corresponds to 320 to 327; that stretch reads NVTVVSLV. Residues 328–348 form a helical; Voltage-sensor membrane-spanning segment; the sequence is HLLKTVRLLRLLRLLQKLDRY. The Cytoplasmic portion of the chain corresponds to 349 to 353; it reads SQHST. Residues 354-374 traverse the membrane as a helical segment; the sequence is IVLTLLMSMFALLAHWMACIW. Residues 375–419 lie on the Extracellular side of the membrane; it reads YVIGKMEREDNSLLKWEVGWLHELGKRLESPYYGNNTLGGPSIRS. N-linked (GlcNAc...) asparagine glycosylation is present at N409. Residues 420 to 440 constitute an intramembrane region (pore-forming); it reads AYIAALYFTLSSLTSVGFGNV. The short motif at 434–439 is the Selectivity filter element; sequence SVGFGN. At 441–448 the chain is on the extracellular side; sequence SANTDAEK. The helical transmembrane segment at 449-469 threads the bilayer; the sequence is IFSICTMLIGALMHALVFGNV. Residues 470–1102 lie on the Cytoplasmic side of the membrane; sequence TAIIQRMYSR…DVKDSKAINV (633 aa). The tract at residues 551–668 is cNMP-binding domain; it reads LFECASRGCL…HKFVEDIQHD (118 aa). Disordered regions lie at residues 683-744, 762-793, 818-845, and 960-983; these read SRLS…KTGS, PFHSPIRVSSANSPKTKQEADPPNHGTRKEKN, EDGNSSEETQTFDFGSEQIRPEPRISPS, and LVGSNPQRTEAHEQSPVDSELHHS. The segment covering 710-723 has biased composition (acidic residues); that stretch reads VEDEEEEEVEEEET. Basic and acidic residues predominate over residues 777–793; it reads TKQEADPPNHGTRKEKN. Residues 968–982 show a composition bias toward basic and acidic residues; it reads TEAHEQSPVDSELHH.

The protein belongs to the potassium channel family. H (Eag) (TC 1.A.1.20) subfamily. Kv12.1/KCNH8 sub-subfamily. The potassium channel is probably composed of a homo- or heterotetrameric complex of pore-forming alpha subunits that can associate with modulating beta subunits. Detected in superior cervical, mesenteric and coeliac ganglia. Expressed in brain (piriform cortex, olfactory tubercle, cerebral cortex, hippocampus pyramidial cells and dentate gyrus and basal ganglia of caudate/putamen and accumbens nucleus). Expressed in pituitary.

It is found in the membrane. The enzyme catalyses K(+)(in) = K(+)(out). Its function is as follows. Pore-forming (alpha) subunit of a voltage-gated delayed rectifier potassium channel that mediates outward-rectifying potassium currents. Elicits a slowly activating, non-inactivating and slowly deactivation outwards potassium current at depolarizating voltages from -30 mV to +50mV. Shows no obvious change in the activation rate from different holding potentials. Activation is strongly dependent on the pH of the external solution. The polypeptide is Voltage-gated delayed rectifier potassium channel KCNH8 (Rattus norvegicus (Rat)).